Reading from the N-terminus, the 1317-residue chain is Immunoglobulin superfamily member 1 (1317 aa).

The N-terminal stretch at 1–20 (MMLRTFTLLLLCIWLNPGMT) is a signal peptide. Ig-like C2-type domains are found at residues 21 to 112 (SLAV…KILE), 114 to 211 (EAPG…KLVV), 216 to 302 (PKPT…SDIL), 311 to 398 (PKTW…ATYN), and 400 to 481 (VELM…HRSK). Residues 21–499 (SLAVESQPEL…GFLTWNSILN (479 aa)) lie on the Extracellular side of the membrane. Residue N43 is glycosylated (N-linked (GlcNAc...) asparagine). A disulfide bond links C48 and C96. Residues C238 and C286 are joined by a disulfide bond. N-linked (GlcNAc...) asparagine glycans are attached at residues N328 and N371. 2 disulfides stabilise this stretch: C333–C382 and C422–C465. A helical membrane pass occupies residues 500-520 (EAVRVSLTMQLASLLLLVVWI). The Cytoplasmic portion of the chain corresponds to 521–531 (RWKCRRLRLRE). A helical membrane pass occupies residues 532-552 (AWLLGTAQGVAMLFILMALLC). The Extracellular portion of the chain corresponds to 553-1317 (CGLCNGALTE…EVSVELTVPI (765 aa)). Ig-like C2-type domains lie at 570 to 658 (TPKP…ALEL), 659 to 753 (VGTD…ELVI), 758 to 850 (PKPF…LVVT), 854 to 938 (PKPT…SSLS), 946 to 1041 (TDTF…ELIV), 1046 to 1131 (PKPS…NHSN), and 1142 to 1223 (PKPS…EPSD). Cysteines 780 and 830 form a disulfide. Residue N871 is glycosylated (N-linked (GlcNAc...) asparagine). C876 and C923 are disulfide-bonded. 2 N-linked (GlcNAc...) asparagine glycosylation sites follow: N967 and N1063. 2 disulfides stabilise this stretch: C1068/C1115 and C1164/C1207. Positions 1290–1310 (NQEGEPGTTTNSPSSASQEVS) are disordered. Over residues 1296–1309 (GTTTNSPSSASQEV) the composition is skewed to polar residues.

As to quaternary structure, interacts with INHA; the interaction is not confirmed by standard receptor binding assays. Interacts with ACVR1B; the interaction appears to be ligand-dependent as it is diminished by inhibin B and activin A. Interacts with ACVR2A, ACVR2B, ACVRL1 and BMPR1B. Interacts with HECTD1.

The protein localises to the membrane. The protein resides in the secreted. In terms of biological role, seems to be a coreceptor in inhibin signaling, but seems not to be a high-affinity inhibin receptor. Antagonizes activin A signaling in the presence or absence of inhibin B. Necessary to mediate a specific antagonistic effect of inhibin B on activin-stimulated transcription. In Mus musculus (Mouse), this protein is Immunoglobulin superfamily member 1 (Igsf1).